The following is a 291-amino-acid chain: Acetylglutamate kinase (291 aa).

Substrate contacts are provided by residues 64–65 (GG), arginine 86, and asparagine 190.

This sequence belongs to the acetylglutamate kinase family. ArgB subfamily.

The protein resides in the cytoplasm. The catalysed reaction is N-acetyl-L-glutamate + ATP = N-acetyl-L-glutamyl 5-phosphate + ADP. It functions in the pathway amino-acid biosynthesis; L-arginine biosynthesis; N(2)-acetyl-L-ornithine from L-glutamate: step 2/4. Catalyzes the ATP-dependent phosphorylation of N-acetyl-L-glutamate. This Leptospira borgpetersenii serovar Hardjo-bovis (strain L550) protein is Acetylglutamate kinase.